We begin with the raw amino-acid sequence, 233 residues long: 5'-methylthioadenosine/S-adenosylhomocysteine nucleosidase (233 aa).

Residue Glu12 is the Proton acceptor of the active site. Residues Gly78, Ile156, and 177–178 (ME) contribute to the substrate site. Catalysis depends on Asp201, which acts as the Proton donor.

This sequence belongs to the PNP/UDP phosphorylase family. MtnN subfamily.

The enzyme catalyses S-adenosyl-L-homocysteine + H2O = S-(5-deoxy-D-ribos-5-yl)-L-homocysteine + adenine. It catalyses the reaction S-methyl-5'-thioadenosine + H2O = 5-(methylsulfanyl)-D-ribose + adenine. The catalysed reaction is 5'-deoxyadenosine + H2O = 5-deoxy-D-ribose + adenine. It functions in the pathway amino-acid biosynthesis; L-methionine biosynthesis via salvage pathway; S-methyl-5-thio-alpha-D-ribose 1-phosphate from S-methyl-5'-thioadenosine (hydrolase route): step 1/2. Functionally, catalyzes the irreversible cleavage of the glycosidic bond in both 5'-methylthioadenosine (MTA) and S-adenosylhomocysteine (SAH/AdoHcy) to adenine and the corresponding thioribose, 5'-methylthioribose and S-ribosylhomocysteine, respectively. Also cleaves 5'-deoxyadenosine, a toxic by-product of radical S-adenosylmethionine (SAM) enzymes, into 5-deoxyribose and adenine. This Listeria monocytogenes serotype 4b (strain F2365) protein is 5'-methylthioadenosine/S-adenosylhomocysteine nucleosidase.